A 140-amino-acid chain; its full sequence is RNA silencing suppressor (140 aa).

The basic stretch occupies residues 73 to 76 (RRRR). 2 C4-type zinc fingers span residues 83 to 98 (CERCYRVYPPVCGSKC) and 83 to 103 (CERCYRVYPPVCGSKCDNKTC).

It belongs to the carlaviruses nucleic acid-binding protein family.

Its function is as follows. Suppressor of viral-induced RNA silencing. The potential mechanism of action is based on sequestering siRNAs. This chain is RNA silencing suppressor, found in Lily symptomless virus (LSV).